Consider the following 437-residue polypeptide: 5-hydroxytryptamine receptor 3B (437 aa).

An N-terminal signal peptide occupies residues 1–21 (MILLWSCLLVAVVGILGTATP). Residues 22–238 (QPGNSSLHRL…VVIRRCPLAY (217 aa)) are Extracellular-facing. N-linked (GlcNAc...) asparagine glycans are attached at residues asparagine 25, asparagine 92, and asparagine 134. The cysteines at positions 151 and 165 are disulfide-linked. Residues 239 to 259 (VVSLLIPSIFLMLVDLGSFYL) form a helical membrane-spanning segment. The Cytoplasmic portion of the chain corresponds to 260–264 (PPNCR). Residues 265 to 282 (ARIVFKTNVLVGYTVFRV) form a helical membrane-spanning segment. An N-linked (GlcNAc...) asparagine glycan is attached at asparagine 283. Residues 283 to 292 (NMSDEVPRSA) are Extracellular-facing. Residues 293–313 (GCTPLIGVFFTVCMALLVLSL) traverse the membrane as a helical segment. The Cytoplasmic segment spans residues 314–410 (SKSILLIKFL…WLAILYRFDQ (97 aa)). The tract at residues 377–409 (FWFQFRSINNSLRTRDQIHQKEVEWLAILYRFD) is HA-stretch; determines single-channel conductance in 5-HT3 receptors. A helical transmembrane segment spans residues 411 to 431 (LLFRIYLAVLGLYTVTLCSLW). Over 432–437 (ALWSRM) the chain is Extracellular.

It belongs to the ligand-gated ion channel (TC 1.A.9) family. 5-hydroxytryptamine receptor (TC 1.A.9.2) subfamily. HTR3B sub-subfamily. Forms homopentameric as well as heteropentameric serotonin-activated cation-selective channel complexes with HTR3A. The homomeric complex is not functional. Heteropentameric complexes display properties which resemble that of neuronal serotonin-activated channels in vivo. In terms of processing, N-glycosylation is required for membrane localization.

The protein resides in the postsynaptic cell membrane. The protein localises to the cell membrane. The catalysed reaction is Na(+)(in) = Na(+)(out). It catalyses the reaction K(+)(in) = K(+)(out). The enzyme catalyses Ca(2+)(in) = Ca(2+)(out). Its function is as follows. Forms serotonin (5-hydroxytryptamine/5-HT3)-activated cation-selective channel complexes, which when activated cause fast, depolarizing responses in neurons. The sequence is that of 5-hydroxytryptamine receptor 3B from Mus musculus (Mouse).